The sequence spans 631 residues: Anthrax toxin receptor-like (631 aa).

An N-terminal signal peptide occupies residues 1-27; that stretch reads MGSHESLGPYFLVFLLLLLLPPPLFRA. Topologically, residues 28–353 are extracellular; that stretch reads GSLRYHGPDW…TSTTCGIFRN (326 aa). One can recognise a VWFA domain in the interval 76-246; it reads DLYFILDKSG…KALRSTIDAL (171 aa). A divalent metal cation is bound by residues Ser-84, Ser-86, and Thr-150. A helical membrane pass occupies residues 354-374; the sequence is WLYFVPLLLLVPLLLCCVWRL. The Cytoplasmic segment spans residues 375–631; it reads CRKQTVKEPP…LSLPPSEPNF (257 aa). Residues 382–413 form a disordered region; that stretch reads EPPPVQKPEKEPEQEKPPSPPPPPPPPPPPLP. The span at 388 to 397 shows a compositional bias: basic and acidic residues; that stretch reads KPEKEPEQEK. A compositionally biased stretch (pro residues) spans 398–413; it reads PPSPPPPPPPPPPPLP.

This sequence belongs to the ATR family.

The protein localises to the membrane. The chain is Anthrax toxin receptor-like (ANTXRL) from Homo sapiens (Human).